Here is a 236-residue protein sequence, read N- to C-terminus: Small ribosomal subunit protein uS3 (236 aa).

One can recognise a KH type-2 domain in the interval 39-107 (IREFLTEELK…DTSLNIVEVR (69 aa)). Residues 214–236 (ASERRAVEGDNQGSSSNRRRENA) form a disordered region.

The protein belongs to the universal ribosomal protein uS3 family. Part of the 30S ribosomal subunit. Forms a tight complex with proteins S10 and S14.

In terms of biological role, binds the lower part of the 30S subunit head. Binds mRNA in the 70S ribosome, positioning it for translation. The protein is Small ribosomal subunit protein uS3 of Brucella abortus (strain S19).